The primary structure comprises 71 residues: Small ribosomal subunit protein bS21 (71 aa).

Belongs to the bacterial ribosomal protein bS21 family.

The polypeptide is Small ribosomal subunit protein bS21 (Chromohalobacter salexigens (strain ATCC BAA-138 / DSM 3043 / CIP 106854 / NCIMB 13768 / 1H11)).